The following is a 465-amino-acid chain: Pancreatic triacylglycerol lipase (465 aa).

Residues 1-16 form the signal peptide; that stretch reads MLPLWTLSLLLGAVAG. 2 cysteine pairs are disulfide-bonded: C20–C26 and C107–C118. The Nucleophile role is filled by S169. A glycan (N-linked (GlcNAc...) asparagine) is linked at N183. Catalysis depends on D193, which acts as the Charge relay system. Positions 204, 207, 209, and 212 each coordinate Ca(2+). C254 and C278 are disulfide-bonded. Residue H280 is the Charge relay system of the active site. Disulfide bonds link C302–C313, C316–C321, and C449–C465. In terms of domain architecture, PLAT spans 355-465; it reads WRYKVSVTLS…EEVLLTLTPC (111 aa).

Belongs to the AB hydrolase superfamily. Lipase family. Forms a 1:1 stoichiometric complex with (pro)colipase/CLPS.

Its subcellular location is the secreted. It carries out the reaction a triacylglycerol + H2O = a diacylglycerol + a fatty acid + H(+). It catalyses the reaction 1,2,3-tributanoylglycerol + H2O = dibutanoylglycerol + butanoate + H(+). The catalysed reaction is 1,2,3-tri-(9Z-octadecenoyl)-glycerol + H2O = di-(9Z)-octadecenoylglycerol + (9Z)-octadecenoate + H(+). The enzyme catalyses all-trans-retinyl hexadecanoate + H2O = all-trans-retinol + hexadecanoate + H(+). It carries out the reaction 1,2-di-(9Z-octadecenoyl)-glycerol + H2O = (9Z-octadecenoyl)-glycerol + (9Z)-octadecenoate + H(+). Its activity is regulated as follows. Inhibited by bile salts, is reactivated by (pro)colipase/CLPS. In terms of biological role, plays an important role in fat metabolism. It preferentially splits the esters of long-chain fatty acids at positions 1 and 3, producing mainly 2-monoacylglycerol and free fatty acids, and shows considerably higher activity against insoluble emulsified substrates than against soluble ones. In Homo sapiens (Human), this protein is Pancreatic triacylglycerol lipase.